Reading from the N-terminus, the 183-residue chain is NADH-ubiquinone oxidoreductase 20.8 kDa subunit (183 aa).

CHCH domains follow at residues 44–87 (GARC…IADI) and 88–130 (NKSC…LGLK). 4 short sequence motifs (cx9C motif) span residues 47-57 (CRDYNDDFMQC), 69-79 (CLKEGRRVTRC), 91-101 (CLEEFRKHWTC), and 112-122 (CRPAEWKLNKC). 4 disulfides stabilise this stretch: cysteine 47/cysteine 79, cysteine 57/cysteine 69, cysteine 91/cysteine 122, and cysteine 101/cysteine 112. A disordered region spans residues 161–183 (EPFVPPTQTGDNNKAPAAASSSS).

Belongs to the complex I NDUFA8 subunit family. Complex I is composed of about 40 different subunits. This is a component of the hydrophobic fraction. It depends on iron-sulfur cluster as a cofactor.

It is found in the mitochondrion inner membrane. Accessory subunit of the mitochondrial membrane respiratory chain NADH dehydrogenase (Complex I), that is believed not to be involved in catalysis. Complex I functions in the transfer of electrons from NADH to the respiratory chain. The immediate electron acceptor for the enzyme is believed to be ubiquinone. The sequence is that of NADH-ubiquinone oxidoreductase 20.8 kDa subunit from Neurospora crassa (strain ATCC 24698 / 74-OR23-1A / CBS 708.71 / DSM 1257 / FGSC 987).